The primary structure comprises 384 residues: Methylthioribose-1-phosphate isomerase (384 aa).

The active-site Proton donor is the Asp-255.

It belongs to the eIF-2B alpha/beta/delta subunits family. MtnA subfamily.

The protein resides in the cytoplasm. The protein localises to the nucleus. The enzyme catalyses 5-(methylsulfanyl)-alpha-D-ribose 1-phosphate = 5-(methylsulfanyl)-D-ribulose 1-phosphate. It functions in the pathway amino-acid biosynthesis; L-methionine biosynthesis via salvage pathway; L-methionine from S-methyl-5-thio-alpha-D-ribose 1-phosphate: step 1/6. Functionally, catalyzes the interconversion of methylthioribose-1-phosphate (MTR-1-P) into methylthioribulose-1-phosphate (MTRu-1-P). This chain is Methylthioribose-1-phosphate isomerase (mri1), found in Talaromyces stipitatus (strain ATCC 10500 / CBS 375.48 / QM 6759 / NRRL 1006) (Penicillium stipitatum).